Consider the following 497-residue polypeptide: 4,4'-diaponeurosporene oxygenase (497 aa).

7–19 lines the FAD pocket; that stretch reads VIGGGLGGISAAI.

Belongs to the carotenoid/retinoid oxidoreductase family. CrtP subfamily. FAD is required as a cofactor.

The catalysed reaction is all-trans-4,4'-diaponeurosporene + 2 AH2 + 2 O2 = 4,4'-diaponeurosporenal + 2 A + 3 H2O. Its pathway is carotenoid biosynthesis; staphyloxanthin biosynthesis; staphyloxanthin from farnesyl diphosphate: step 3/5. Functionally, involved in the biosynthesis of the yellow-orange carotenoid staphyloxanthin, which plays a role in the virulence via its protective function against oxidative stress. Catalyzes the oxidation of the terminal methyl side group of 4,4'-diaponeurosporene to form 4,4'-diaponeurosporen-4-al. The chain is 4,4'-diaponeurosporene oxygenase from Staphylococcus aureus (strain MSSA476).